The primary structure comprises 355 residues: Protein RecA (355 aa).

73–80 serves as a coordination point for ATP; sequence GPESSGKT.

The protein belongs to the RecA family.

It localises to the cytoplasm. Can catalyze the hydrolysis of ATP in the presence of single-stranded DNA, the ATP-dependent uptake of single-stranded DNA by duplex DNA, and the ATP-dependent hybridization of homologous single-stranded DNAs. It interacts with LexA causing its activation and leading to its autocatalytic cleavage. This is Protein RecA from Solidesulfovibrio magneticus (strain ATCC 700980 / DSM 13731 / RS-1) (Desulfovibrio magneticus).